The sequence spans 503 residues: Aromatase (503 aa).

2 helical membrane-spanning segments follow: residues 19 to 39 (EVVP…LLVW) and 53 to 73 (FLGI…IGSA). 2 residues coordinate substrate: Asp-309 and Met-374. Cys-437 serves as a coordination point for heme.

Belongs to the cytochrome P450 family. Heme is required as a cofactor.

It is found in the endoplasmic reticulum membrane. The protein localises to the microsome membrane. The catalysed reaction is testosterone + 3 reduced [NADPH--hemoprotein reductase] + 3 O2 = 17beta-estradiol + formate + 3 oxidized [NADPH--hemoprotein reductase] + 4 H2O + 4 H(+). It catalyses the reaction androst-4-ene-3,17-dione + 3 reduced [NADPH--hemoprotein reductase] + 3 O2 = estrone + formate + 3 oxidized [NADPH--hemoprotein reductase] + 4 H2O + 4 H(+). It carries out the reaction androst-4-ene-3,17-dione + reduced [NADPH--hemoprotein reductase] + O2 = 19-hydroxyandrost-4-ene-3,17-dione + oxidized [NADPH--hemoprotein reductase] + H2O + H(+). The enzyme catalyses 19-hydroxyandrost-4-ene-3,17-dione + reduced [NADPH--hemoprotein reductase] + O2 = 19-oxo-androst-4-ene-3,17-dione + oxidized [NADPH--hemoprotein reductase] + 2 H2O + H(+). The catalysed reaction is 19-oxo-androst-4-ene-3,17-dione + reduced [NADPH--hemoprotein reductase] + O2 = estrone + formate + oxidized [NADPH--hemoprotein reductase] + H2O + 2 H(+). It catalyses the reaction estrone + reduced [NADPH--hemoprotein reductase] + O2 = 2-hydroxyestrone + oxidized [NADPH--hemoprotein reductase] + H2O + H(+). It carries out the reaction 17beta-hydroxy-5alpha-androstan-3-one + reduced [NADPH--hemoprotein reductase] + O2 = 17beta,19-dihydroxy-3-oxo-5alpha-androstanone + oxidized [NADPH--hemoprotein reductase] + H2O + H(+). The enzyme catalyses 17beta,19-dihydroxy-3-oxo-5alpha-androstanone + reduced [NADPH--hemoprotein reductase] + O2 = 17beta-hydroxy-3,19-dioxo-5alpha-androstanone + oxidized [NADPH--hemoprotein reductase] + 2 H2O + H(+). The catalysed reaction is 17beta-hydroxy-3,19-dioxo-5alpha-androstanone + reduced [NADPH--hemoprotein reductase] + O2 = 17beta-hydroxy-3-oxo-19-nor-5alpha-androst-1-ene + formate + oxidized [NADPH--hemoprotein reductase] + H2O + 2 H(+). It participates in steroid hormone biosynthesis. Its function is as follows. A cytochrome P450 monooxygenase that catalyzes the conversion of C19 androgens, androst-4-ene-3,17-dione (androstenedione) and testosterone to the C18 estrogens, estrone and estradiol, respectively. Catalyzes three successive oxidations of C19 androgens: two conventional oxidations at C19 yielding 19-hydroxy and 19-oxo/19-aldehyde derivatives, followed by a third oxidative aromatization step that involves C1-beta hydrogen abstraction combined with cleavage of the C10-C19 bond to yield a phenolic A ring and formic acid. Alternatively, the third oxidative reaction yields a 19-norsteroid and formic acid. Converts dihydrotestosterone to delta1,10-dehydro 19-nordihydrotestosterone and may play a role in homeostasis of this potent androgen. Also displays 2-hydroxylase activity toward estrone. Mechanistically, uses molecular oxygen inserting one oxygen atom into a substrate, and reducing the second into a water molecule, with two electrons provided by NADPH via cytochrome P450 reductase (CPR; NADPH-ferrihemoprotein reductase). The protein is Aromatase (CYP19A1) of Bos taurus (Bovine).